The primary structure comprises 90 residues: Acylphosphatase (90 aa).

Residues 5–90 (GCKVIVSGIV…YQKTNDFIAC (86 aa)) form the Acylphosphatase-like domain. Active-site residues include Arg20 and Asn38.

Belongs to the acylphosphatase family.

It catalyses the reaction an acyl phosphate + H2O = a carboxylate + phosphate + H(+). This chain is Acylphosphatase (acyP), found in Psychromonas ingrahamii (strain DSM 17664 / CCUG 51855 / 37).